Consider the following 484-residue polypeptide: Probable protein disulfide-isomerase ER-60 (484 aa).

Positions 1–14 are cleaved as a signal peptide; the sequence is MRWLLSCLFLVAFA. 2 Thioredoxin domains span residues 15–125 and 338–467; these read SCSK…SRAG and FEDG…REAT. Residues Cys-46, Cys-49, Cys-388, and Cys-391 each act as nucleophile in the active site. 2 disulfide bridges follow: Cys-46–Cys-49 and Cys-388–Cys-391. The Prevents secretion from ER signature appears at 481 to 484; the sequence is KSEL.

The protein belongs to the protein disulfide isomerase family.

It is found in the endoplasmic reticulum lumen. It carries out the reaction Catalyzes the rearrangement of -S-S- bonds in proteins.. This chain is Probable protein disulfide-isomerase ER-60, found in Schistosoma mansoni (Blood fluke).